The following is a 455-amino-acid chain: Hexokinase-2 (455 aa).

One can recognise a Hexokinase domain in the interval 3–445 (ANFQQAVKKL…SGIGAALCAL (443 aa)). Residues 57 to 195 (TGAETGDFLA…NLPIRIEAVI (139 aa)) are hexokinase small subdomain. Residue 68–73 (DFGGTN) participates in ATP binding. Substrate contacts are provided by residues 144–145 (SY), 161–162 (TK), and 196–197 (ND). Residues 196 to 434 (NDTVGTLVTR…KLISIGIAKD (239 aa)) form a hexokinase large subdomain region. ATP is bound at residue T222. Residues N225, E252, and E283 each coordinate substrate. Residues 288-289 (GM), 325-329 (TSVLS), and 400-404 (SLVEH) each bind ATP.

This sequence belongs to the hexokinase family. As to quaternary structure, monomer.

It carries out the reaction a D-hexose + ATP = a D-hexose 6-phosphate + ADP + H(+). It catalyses the reaction D-mannose + ATP = D-mannose 6-phosphate + ADP + H(+). The catalysed reaction is D-fructose + ATP = D-fructose 6-phosphate + ADP + H(+). The enzyme catalyses D-glucose + ATP = D-glucose 6-phosphate + ADP + H(+). It participates in carbohydrate metabolism; hexose metabolism. The protein operates within carbohydrate degradation; glycolysis; D-glyceraldehyde 3-phosphate and glycerone phosphate from D-glucose: step 1/4. Its function is as follows. Catalyzes the phosphorylation of hexose (six-carbon sugars) to hexose 6-phosphate. Phosphorylates D-glucose, D-fructose and D-mannose. Compared to hxk1, has a much higher affinity for D-glucose. Constitutes the initial enzyme of glycolysis by catalyzing the phosphorylation of glucose to D-glucose 6-phosphate. This chain is Hexokinase-2, found in Schizosaccharomyces pombe (strain 972 / ATCC 24843) (Fission yeast).